A 728-amino-acid chain; its full sequence is Myb-related protein A (728 aa).

The interval 1–31 (MAGRARSEDEEEDGQFTEHDYDVSLQKGPKK) is disordered. HTH myb-type domains follow at residues 30-80 (KKPW…HKVL), 81-136 (SPEL…NPDV), and 137-187 (KKSS…KRKV). DNA-binding regions (H-T-H motif) lie at residues 57-80 (WGVV…HKVL), 109-132 (WSII…HNHL), and 160-183 (WAEI…NSTM). The interval 230-293 (IPRYSSLSHD…RKRVPSGSSL (64 aa)) is transcriptional activation domain. A negative regulatory domain region spans residues 296–534 (SESYHMGESM…IRRSLMAVTP (239 aa)).

In terms of assembly, component of the DREAM complex.

It localises to the nucleus. Its function is as follows. Transcription factor that specifically recognizes the sequence 5'-YAAC[GT]G-3'. Acts as a master regulator of male meiosis by promoting expression of piRNAs. The piRNA metabolic process mediates the repression of transposable elements during meiosis by forming complexes composed of piRNAs and Piwi proteins and governs the methylation and subsequent repression of transposons, which is essential for the germline integrity. This Xenopus laevis (African clawed frog) protein is Myb-related protein A (mybl1).